A 911-amino-acid chain; its full sequence is General transcription factor 3C polypeptide 2 (911 aa).

Disordered regions lie at residues 34 to 187 and 205 to 297; these read LDVK…RRRA and ALPA…MAPN. The span at 35–46 shows a compositional bias: polar residues; sequence DVKTSSEMTSAE. Ser63 is subject to Phosphoserine. The span at 64–81 shows a compositional bias: basic and acidic residues; that stretch reads PDQRRLPPEQESLSRLEQ. Residues 92–112 show a composition bias toward basic residues; sequence SKPRASKPGRKRGGRTRKGPK. Positions 114–123 are enriched in pro residues; sequence PQQPNPPSAP. 5 positions are modified to phosphoserine: Ser132, Ser165, Ser167, Ser220, and Ser260. Acidic residues predominate over residues 253–262; that stretch reads EAEDVEESEG. The segment covering 263–275 has biased composition (low complexity); the sequence is PSESSSEPEPAVP. WD repeat units follow at residues 465 to 521 and 552 to 593; these read CDNG…ALLA and SECG…PLQR. Residue Ser597 is modified to Phosphoserine. The stretch at 611–651 is one WD 3 repeat; it reads AHDQAVRTLQWCKANSHFLASAGSDRKIKFWDLRRPYEPIN. Positions 765 to 785 are disordered; the sequence is SPEGPDHSSASSGVPNPPKAR. The stretch at 832–874 is one WD 4 repeat; the sequence is LQLEAIHKVRFSPNLDSYGWLVSGGQSGLVRIHFVRGLASPLG. Phosphoserine is present on residues Ser871, Ser892, and Ser893. The segment at 889 to 911 is disordered; it reads FQPSSPTRRPGFSPTSHRLLPTP. Thr895 is modified (phosphothreonine). The residue at position 901 (Ser901) is a Phosphoserine.

In terms of assembly, part of the TFIIIC subcomplex TFIIIC2, consisting of six subunits, GTF3C1, GTF3C2, GTF3C3, GTF3C4, GTF3C5 and GTF3C6.

Its subcellular location is the nucleus. In terms of biological role, required for RNA polymerase III-mediated transcription. Component of TFIIIC that initiates transcription complex assembly on tRNA and is required for transcription of 5S rRNA and other stable nuclear and cytoplasmic RNAs. May play a direct role in stabilizing interactions of TFIIIC2 with TFIIIC1. This chain is General transcription factor 3C polypeptide 2 (GTF3C2), found in Pongo abelii (Sumatran orangutan).